The chain runs to 237 residues: Leucyl/phenylalanyl-tRNA--protein transferase (237 aa).

This sequence belongs to the L/F-transferase family.

It localises to the cytoplasm. It catalyses the reaction N-terminal L-lysyl-[protein] + L-leucyl-tRNA(Leu) = N-terminal L-leucyl-L-lysyl-[protein] + tRNA(Leu) + H(+). It carries out the reaction N-terminal L-arginyl-[protein] + L-leucyl-tRNA(Leu) = N-terminal L-leucyl-L-arginyl-[protein] + tRNA(Leu) + H(+). The catalysed reaction is L-phenylalanyl-tRNA(Phe) + an N-terminal L-alpha-aminoacyl-[protein] = an N-terminal L-phenylalanyl-L-alpha-aminoacyl-[protein] + tRNA(Phe). Its function is as follows. Functions in the N-end rule pathway of protein degradation where it conjugates Leu, Phe and, less efficiently, Met from aminoacyl-tRNAs to the N-termini of proteins containing an N-terminal arginine or lysine. The protein is Leucyl/phenylalanyl-tRNA--protein transferase of Shewanella baltica (strain OS223).